The following is a 173-amino-acid chain: Alpha-crystallin A chain (173 aa).

Methionine 1 is subject to N-acetylmethionine. Residues 1-63 (MDIAIQHPWF…RTVLDSGISE (63 aa)) form a required for complex formation with BFSP1 and BFSP2 region. Glutamine 6 is modified (deamidated glutamine; partial). Residue lysine 11 is glycosylated (N-linked (Glc) (glycation) lysine). Serine 45 bears the Phosphoserine mark. Glutamine 50 is subject to Deamidated glutamine; partial. In terms of domain architecture, sHSP spans 52–162 (LFRTVLDSGI…GHSERAIPVS (111 aa)). Lysine 70 carries the post-translational modification N6-acetyllysine. Lysine 78 carries an N-linked (Glc) (glycation) lysine glycan. Glutamine 90 is modified (deamidated glutamine; partial). Residue lysine 99 is modified to N6-acetyllysine. Residue histidine 100 participates in Zn(2+) binding. Asparagine 101 is modified (deamidated asparagine; partial). Zn(2+)-binding residues include glutamate 102 and histidine 107. Position 122 is a phosphoserine (serine 122). At asparagine 123 the chain carries Deamidated asparagine; partial. A disordered region spans residues 144–173 (PKIPSGVDAGHSERAIPVSREEKPSSAPSS). Residues 153 to 167 (GHSERAIPVSREEKP) show a composition bias toward basic and acidic residues. Position 154 (histidine 154) interacts with Zn(2+). Positions 157–163 (RAIPVSR) are important for oligomerization. An O-linked (GlcNAc) serine glycan is attached at serine 162.

The protein belongs to the small heat shock protein (HSP20) family. In terms of assembly, heteromer composed of three CRYAA and one CRYAB subunits. Inter-subunit bridging via zinc ions enhances stability, which is crucial as there is no protein turn over in the lens. Can also form homodimers and homotetramers (dimers of dimers) which serve as the building blocks of homooligomers. Within homooligomers, the zinc-binding motif is created from residues of 3 different molecules. His-100 and Glu-102 from one molecule are ligands of the zinc ion, and His-107 and His-154 residues from additional molecules complete the site with tetrahedral coordination geometry. Part of a complex required for lens intermediate filament formation composed of BFSP1, BFSP2 and CRYAA. Post-translationally, acetylation at Lys-70 may increase chaperone activity. In terms of processing, undergoes age-dependent proteolytical cleavage at the C-terminus.

The protein resides in the cytoplasm. The protein localises to the nucleus. Contributes to the transparency and refractive index of the lens. Acts as a chaperone, preventing aggregation of various proteins under a wide range of stress conditions. Required for the correct formation of lens intermediate filaments as part of a complex composed of BFSP1, BFSP2 and CRYAA. The polypeptide is Alpha-crystallin A chain (CRYAA) (Bos taurus (Bovine)).